The following is a 167-amino-acid chain: Large ribosomal subunit protein uL10 (167 aa).

This sequence belongs to the universal ribosomal protein uL10 family. In terms of assembly, part of the ribosomal stalk of the 50S ribosomal subunit. The N-terminus interacts with L11 and the large rRNA to form the base of the stalk. The C-terminus forms an elongated spine to which L12 dimers bind in a sequential fashion forming a multimeric L10(L12)X complex.

Functionally, forms part of the ribosomal stalk, playing a central role in the interaction of the ribosome with GTP-bound translation factors. The sequence is that of Large ribosomal subunit protein uL10 from Cytophaga hutchinsonii (strain ATCC 33406 / DSM 1761 / CIP 103989 / NBRC 15051 / NCIMB 9469 / D465).